Consider the following 307-residue polypeptide: Methionyl-tRNA formyltransferase (307 aa).

108–111 (SLLP) lines the (6S)-5,6,7,8-tetrahydrofolate pocket.

Belongs to the Fmt family.

It carries out the reaction L-methionyl-tRNA(fMet) + (6R)-10-formyltetrahydrofolate = N-formyl-L-methionyl-tRNA(fMet) + (6S)-5,6,7,8-tetrahydrofolate + H(+). Attaches a formyl group to the free amino group of methionyl-tRNA(fMet). The formyl group appears to play a dual role in the initiator identity of N-formylmethionyl-tRNA by promoting its recognition by IF2 and preventing the misappropriation of this tRNA by the elongation apparatus. This is Methionyl-tRNA formyltransferase from Renibacterium salmoninarum (strain ATCC 33209 / DSM 20767 / JCM 11484 / NBRC 15589 / NCIMB 2235).